The chain runs to 69 residues: Small ribosomal subunit protein bS21 (69 aa).

Residues 49–69 (IESAKRKAEKKKRLFSKKDKA) are disordered.

This sequence belongs to the bacterial ribosomal protein bS21 family.

The protein is Small ribosomal subunit protein bS21 of Leptospira borgpetersenii serovar Hardjo-bovis (strain JB197).